The sequence spans 145 residues: Large ribosomal subunit protein uL15 (145 aa).

The interval 1-58 (MKLHELSPSEGSRKKRKRVGRGPGSGMGGTSTRGNKGHNQRSGGGTRPGFEGGQMPLH) is disordered. Gly residues-rich tracts occupy residues 21–31 (RGPGSGMGGTS) and 42–52 (SGGGTRPGFEG).

The protein belongs to the universal ribosomal protein uL15 family. In terms of assembly, part of the 50S ribosomal subunit.

Functionally, binds to the 23S rRNA. In Desulforapulum autotrophicum (strain ATCC 43914 / DSM 3382 / VKM B-1955 / HRM2) (Desulfobacterium autotrophicum), this protein is Large ribosomal subunit protein uL15.